The sequence spans 171 residues: 3-hydroxyanthranilate 3,4-dioxygenase (171 aa).

Residue Arg-44 participates in O2 binding. Residues His-48, Glu-54, and His-92 each contribute to the Fe cation site. Glu-54 is a binding site for substrate. Residues Arg-96 and Glu-106 each coordinate substrate. 4 residues coordinate a divalent metal cation: Cys-121, Cys-126, Cys-160, and Cys-163.

It belongs to the 3-HAO family. The cofactor is Fe(2+).

The protein localises to the cytoplasm. It catalyses the reaction 3-hydroxyanthranilate + O2 = (2Z,4Z)-2-amino-3-carboxymuconate 6-semialdehyde. It participates in cofactor biosynthesis; NAD(+) biosynthesis; quinolinate from L-kynurenine: step 3/3. In terms of biological role, catalyzes the oxidative ring opening of 3-hydroxyanthranilate to 2-amino-3-carboxymuconate semialdehyde, which spontaneously cyclizes to quinolinate. The sequence is that of 3-hydroxyanthranilate 3,4-dioxygenase from Yarrowia lipolytica (strain CLIB 122 / E 150) (Yeast).